We begin with the raw amino-acid sequence, 1155 residues long: RhoGEF domain-containing protein gxcJ (1155 aa).

Disordered stretches follow at residues 114-216, 259-333, 429-460, 484-508, and 604-639; these read ENNS…NFLK, LNKK…IPSN, LVSQSPPPPQPPFLASASSSSTTTITTTDSLE, LNNESAASSSSLSTTTTTTTTTTTT, and SNSNSSNNNNSNSNNITNSNSSSFSKKNSNNNNNYQ. Low complexity-rich tracts occupy residues 115–153, 161–211, and 260–303; these read NNSINDNNNNNNNNNNNNNNNNNNNNNNNNNNNNNTNNN, TITN…NNNN, and NKKS…NNNN. The stretch at 192 to 257 forms a coiled coil; sequence NNNNNNNNNN…KDIEKLNSAL (66 aa). Polar residues predominate over residues 304–319; it reads YKPTITSSQTQPSLME. The span at 320–330 shows a compositional bias: basic and acidic residues; sequence NSKDIDKKEKI. The segment covering 441-457 has biased composition (low complexity); it reads FLASASSSSTTTITTTD. The segment covering 604–637 has biased composition (low complexity); the sequence is SNSNSSNNNNSNSNNITNSNSSSFSKKNSNNNNN. Residues 700-874 form the DH domain; the sequence is HRTNLIKEIL…EKIVGTINSQ (175 aa). Residues 1084–1155 form a disordered region; sequence SHRLSIPSTS…LVKSLVNIKT (72 aa). Low complexity-rich tracts occupy residues 1093-1121 and 1128-1137; these read SSPNNGASLNGNSSSNSSSTSISTVGSPN and QQQQLQQQQQ.

Functionally, GTPase-activating protein. This is RhoGEF domain-containing protein gxcJ (gxcJ) from Dictyostelium discoideum (Social amoeba).